The sequence spans 197 residues: Putative double homeobox protein 3 (197 aa).

2 DNA-binding regions (homeobox) span residues 46-105 (GRRM…LRQH) and 121-180 (GRRK…WGQS). The segment at 102–127 (LRQHRRQSRPWPGRRDPQKGRRKRTA) is disordered.

It belongs to the paired homeobox family. As to expression, expressed in hepatoma Hep3B cells.

Its subcellular location is the nucleus. In Homo sapiens (Human), this protein is Putative double homeobox protein 3 (DUX3).